The chain runs to 329 residues: DNA-directed RNA polymerase subunit alpha (329 aa).

The segment at 1-235 is alpha N-terminal domain (alpha-NTD); the sequence is MLGSVTDFLK…EQLEAFVDLR (235 aa). Residues 249-329 are alpha C-terminal domain (alpha-CTD); that stretch reads FDPILLRPVD…NWPPASIADE (81 aa).

This sequence belongs to the RNA polymerase alpha chain family. Homodimer. The RNAP catalytic core consists of 2 alpha, 1 beta, 1 beta' and 1 omega subunit. When a sigma factor is associated with the core the holoenzyme is formed, which can initiate transcription.

The enzyme catalyses RNA(n) + a ribonucleoside 5'-triphosphate = RNA(n+1) + diphosphate. Its function is as follows. DNA-dependent RNA polymerase catalyzes the transcription of DNA into RNA using the four ribonucleoside triphosphates as substrates. The polypeptide is DNA-directed RNA polymerase subunit alpha (Aeromonas hydrophila subsp. hydrophila (strain ATCC 7966 / DSM 30187 / BCRC 13018 / CCUG 14551 / JCM 1027 / KCTC 2358 / NCIMB 9240 / NCTC 8049)).